A 267-amino-acid chain; its full sequence is Putative transcription factor Ovo-like 1 (267 aa).

C2H2-type zinc fingers lie at residues 118 to 140 (FTCHICQKAFTYQRMLNRHMKCH), 146 to 168 (HLCTYCGKGFNDTFDLKRHVRTH), 174 to 197 (YKCSLCDKAFTQRCSLESHLKKIH), and 213 to 235 (YVCEECGCTSESQEGHVLHLKEH).

It is found in the nucleus. Its function is as follows. Putative transcription factor. Involved in hair formation and spermatogenesis. May function in the differentiation and/or maintenance of the urogenital system. The polypeptide is Putative transcription factor Ovo-like 1 (OVOL1) (Bos taurus (Bovine)).